Consider the following 356-residue polypeptide: MAGLKLQAVTKSWDGKTQVIQPLTLDVADGEFIVMVGPSGCGKSTLLRMVAGLERVTSGDIWIDRKRVTEMEPKDRGIAMVFQNYALYPHMSVEENMAWGLKIRGMSKAHIEERVREAARILELDGLLKRRPRELSGGQRQRVAMGRAIVREPAVFLFDEPLSNLDAKLRVQMRLELQHLHRRLRTTSLYVTHDQVEAMTLAQRVMVMNKGVAEQIGTPVEVYEKPASRFVASFIGSPAMNLLDGVISASGDRFELPGGLALPIGADYRGHAGRNMTLGIRPEHIALSSQAEGGVPLTVDTLEILGADNLAHGRWGDQKLVVRLAHQQRPAAGSTLWLHLPEHQRHLFDGETGQRV.

The ABC transporter domain occupies 4-235; that stretch reads LKLQAVTKSW…PASRFVASFI (232 aa). 37 to 44 is an ATP binding site; that stretch reads GPSGCGKS.

The protein belongs to the ABC transporter superfamily. sn-glycerol-3-phosphate importer (TC 3.A.1.1.3) family. In terms of assembly, the complex is composed of two ATP-binding proteins (UgpC), two transmembrane proteins (UgpA and UgpE) and a solute-binding protein (UgpB).

The protein resides in the cell inner membrane. The enzyme catalyses sn-glycerol 3-phosphate(out) + ATP + H2O = sn-glycerol 3-phosphate(in) + ADP + phosphate + H(+). Functionally, part of the ABC transporter complex UgpBAEC involved in sn-glycerol-3-phosphate (G3P) import. Responsible for energy coupling to the transport system. The chain is sn-glycerol-3-phosphate import ATP-binding protein UgpC from Salmonella typhimurium (strain LT2 / SGSC1412 / ATCC 700720).